Consider the following 99-residue polypeptide: Small ribosomal subunit protein uS17 (99 aa).

Belongs to the universal ribosomal protein uS17 family. As to quaternary structure, part of the 30S ribosomal subunit.

One of the primary rRNA binding proteins, it binds specifically to the 5'-end of 16S ribosomal RNA. This chain is Small ribosomal subunit protein uS17, found in Thermosipho africanus (strain TCF52B).